The following is a 262-amino-acid chain: MIHETAKIHPAAVVEEGAKIGANVTVGPFTYITSTVEIGEGTEVMSHVVIKGHTKIGKDNRIFPHAVIGEENQDKKYGGEDTTVVIGDRNVIREAVQVHRGTVQDKATTVIGDDNLLCVNAHIAHDVVVGNHTHIGNNAILGGHVTVEDHAGVMALSAIHPFCTVGAYAYVGGCSAVVQDVPAYVLAQGNHATPFGLNLVGLKRNGFEKPEIRALQKAYKEIYRSGKTLEEVKPILAEMAQEWPAVKRFSDILETTERGIIR.

Belongs to the transferase hexapeptide repeat family. LpxA subfamily. Homotrimer.

The protein resides in the cytoplasm. The enzyme catalyses a (3R)-hydroxyacyl-[ACP] + UDP-N-acetyl-alpha-D-glucosamine = a UDP-3-O-[(3R)-3-hydroxyacyl]-N-acetyl-alpha-D-glucosamine + holo-[ACP]. The protein operates within glycolipid biosynthesis; lipid IV(A) biosynthesis; lipid IV(A) from (3R)-3-hydroxytetradecanoyl-[acyl-carrier-protein] and UDP-N-acetyl-alpha-D-glucosamine: step 1/6. Functionally, involved in the biosynthesis of lipid A, a phosphorylated glycolipid that anchors the lipopolysaccharide to the outer membrane of the cell. The chain is Acyl-[acyl-carrier-protein]--UDP-N-acetylglucosamine O-acyltransferase from Vibrio parahaemolyticus serotype O3:K6 (strain RIMD 2210633).